Consider the following 421-residue polypeptide: 3-phosphoshikimate 1-carboxyvinyltransferase (421 aa).

3-phosphoshikimate is bound by residues Lys-19, Ser-20, and Arg-24. Lys-19 contributes to the phosphoenolpyruvate binding site. The phosphoenolpyruvate site is built by Gly-88 and Arg-116. 3-phosphoshikimate-binding residues include Ser-160, Gln-162, Asp-307, and Lys-334. Gln-162 provides a ligand contact to phosphoenolpyruvate. Asp-307 serves as the catalytic Proton acceptor. 2 residues coordinate phosphoenolpyruvate: Arg-338 and Arg-380.

It belongs to the EPSP synthase family. In terms of assembly, monomer.

Its subcellular location is the cytoplasm. It catalyses the reaction 3-phosphoshikimate + phosphoenolpyruvate = 5-O-(1-carboxyvinyl)-3-phosphoshikimate + phosphate. The protein operates within metabolic intermediate biosynthesis; chorismate biosynthesis; chorismate from D-erythrose 4-phosphate and phosphoenolpyruvate: step 6/7. Its function is as follows. Catalyzes the transfer of the enolpyruvyl moiety of phosphoenolpyruvate (PEP) to the 5-hydroxyl of shikimate-3-phosphate (S3P) to produce enolpyruvyl shikimate-3-phosphate and inorganic phosphate. The sequence is that of 3-phosphoshikimate 1-carboxyvinyltransferase from Thermotoga sp. (strain RQ2).